The sequence spans 204 residues: Somatotropin (204 aa).

Positions 1 to 17 are cleaved as a signal peptide; it reads MDRVVLMLSVLSLGVSS. Pyrrolidone carboxylic acid is present on glutamine 18. Residue histidine 36 participates in Zn(2+) binding. Cysteine 69 and cysteine 177 are oxidised to a cystine. Glutamate 186 is a Zn(2+) binding site. Cysteine 194 and cysteine 202 form a disulfide bridge.

The protein belongs to the somatotropin/prolactin family.

It is found in the secreted. Its function is as follows. Growth hormone plays an important role in growth control and is involved in the regulation of several anabolic processes. Implicated as an osmoregulatory substance important for seawater adaptation. This chain is Somatotropin (gh), found in Acanthopagrus latus (Yellowfin seabream).